Here is a 427-residue protein sequence, read N- to C-terminus: Serine hydroxymethyltransferase (427 aa).

(6S)-5,6,7,8-tetrahydrofolate-binding positions include leucine 124 and 128-130 (GHL). Lysine 233 is subject to N6-(pyridoxal phosphate)lysine.

It belongs to the SHMT family. In terms of assembly, homodimer. It depends on pyridoxal 5'-phosphate as a cofactor.

The protein localises to the cytoplasm. It carries out the reaction (6R)-5,10-methylene-5,6,7,8-tetrahydrofolate + glycine + H2O = (6S)-5,6,7,8-tetrahydrofolate + L-serine. The protein operates within one-carbon metabolism; tetrahydrofolate interconversion. It participates in amino-acid biosynthesis; glycine biosynthesis; glycine from L-serine: step 1/1. Functionally, catalyzes the reversible interconversion of serine and glycine with tetrahydrofolate (THF) serving as the one-carbon carrier. This reaction serves as the major source of one-carbon groups required for the biosynthesis of purines, thymidylate, methionine, and other important biomolecules. Also exhibits THF-independent aldolase activity toward beta-hydroxyamino acids, producing glycine and aldehydes, via a retro-aldol mechanism. The chain is Serine hydroxymethyltransferase from Acidothermus cellulolyticus (strain ATCC 43068 / DSM 8971 / 11B).